We begin with the raw amino-acid sequence, 443 residues long: ATP-dependent protease ATPase subunit HslU (443 aa).

Residues Ile-20, 62-67, Asp-255, Glu-321, and Arg-393 contribute to the ATP site; that span reads GVGKTE.

It belongs to the ClpX chaperone family. HslU subfamily. As to quaternary structure, a double ring-shaped homohexamer of HslV is capped on each side by a ring-shaped HslU homohexamer. The assembly of the HslU/HslV complex is dependent on binding of ATP.

The protein localises to the cytoplasm. ATPase subunit of a proteasome-like degradation complex; this subunit has chaperone activity. The binding of ATP and its subsequent hydrolysis by HslU are essential for unfolding of protein substrates subsequently hydrolyzed by HslV. HslU recognizes the N-terminal part of its protein substrates and unfolds these before they are guided to HslV for hydrolysis. This is ATP-dependent protease ATPase subunit HslU from Helicobacter pylori (strain G27).